Here is a 259-residue protein sequence, read N- to C-terminus: 3-deoxy-manno-octulosonate cytidylyltransferase (259 aa).

Belongs to the KdsB family.

The protein resides in the cytoplasm. The enzyme catalyses 3-deoxy-alpha-D-manno-oct-2-ulosonate + CTP = CMP-3-deoxy-beta-D-manno-octulosonate + diphosphate. The protein operates within nucleotide-sugar biosynthesis; CMP-3-deoxy-D-manno-octulosonate biosynthesis; CMP-3-deoxy-D-manno-octulosonate from 3-deoxy-D-manno-octulosonate and CTP: step 1/1. It participates in bacterial outer membrane biogenesis; lipopolysaccharide biosynthesis. Functionally, activates KDO (a required 8-carbon sugar) for incorporation into bacterial lipopolysaccharide in Gram-negative bacteria. The polypeptide is 3-deoxy-manno-octulosonate cytidylyltransferase (Xanthomonas axonopodis pv. citri (strain 306)).